A 682-amino-acid polypeptide reads, in one-letter code: tRNA(Met) cytidine acetyltransferase TmcA (682 aa).

ATP-binding positions include Gln-176, 198 to 207, and Arg-320; that span reads GRGKSTLAGM. Residues 357–534 form the N-acetyltransferase domain; sequence QQQWIQQPEL…SGCYTAMAIF (178 aa). Residues 462–464 and Glu-502 contribute to the acetyl-CoA site; that span reads VAV.

It belongs to the RNA cytidine acetyltransferase family. TmcA subfamily.

It localises to the cytoplasm. The enzyme catalyses cytidine(34) in elongator tRNA(Met) + acetyl-CoA + ATP + H2O = N(4)-acetylcytidine(34) in elongator tRNA(Met) + ADP + phosphate + CoA + H(+). Its function is as follows. Catalyzes the formation of N(4)-acetylcytidine (ac(4)C) at the wobble position of tRNA(Met), by using acetyl-CoA as an acetyl donor and ATP (or GTP). The chain is tRNA(Met) cytidine acetyltransferase TmcA from Photorhabdus asymbiotica subsp. asymbiotica (strain ATCC 43949 / 3105-77) (Xenorhabdus luminescens (strain 2)).